Reading from the N-terminus, the 482-residue chain is Wax ester synthase/diacylglycerol acyltransferase 9 (482 aa).

The Cytoplasmic portion of the chain corresponds to 1-195 (MEKKMKEEEE…FRLVLVVCST (195 aa)). His-140 serves as the catalytic Proton acceptor. The helical transmembrane segment at 196-216 (VRLIWNTLVDSFLCMATIFFL) threads the bilayer. Over 217-328 (KDTDTPLKGK…AKGSKCRWGN (112 aa)) the chain is Lumenal. Residues 329–349 (YISVILFPFTIALQSDPLVYL) traverse the membrane as a helical segment. The Cytoplasmic segment spans residues 350–366 (SNVKSMIDRKKNSLITY). A helical transmembrane segment spans residues 367 to 387 (IIYTFSEFVIKAFGINVAVAF). The Lumenal portion of the chain corresponds to 388-482 (QRKIMLNTTM…LEKGLPNHVN (95 aa)). Asn-394 carries an N-linked (GlcNAc...) asparagine glycan.

It in the N-terminal section; belongs to the long-chain O-acyltransferase family. Mostly expressed in stems and siliques.

The protein localises to the cell membrane. It is found in the endoplasmic reticulum membrane. It carries out the reaction an acyl-CoA + a 1,2-diacyl-sn-glycerol = a triacyl-sn-glycerol + CoA. The enzyme catalyses a long chain fatty alcohol + a fatty acyl-CoA = a wax ester + CoA. The protein operates within glycerolipid metabolism; triacylglycerol biosynthesis. It functions in the pathway lipid metabolism. In terms of biological role, bifunctional wax ester synthase/diacylglycerol acyltransferase. Involved in cuticular wax biosynthesis. This chain is Wax ester synthase/diacylglycerol acyltransferase 9, found in Arabidopsis thaliana (Mouse-ear cress).